A 273-amino-acid polypeptide reads, in one-letter code: 4-hydroxy-tetrahydrodipicolinate reductase (273 aa).

NAD(+) is bound by residues 12–17 (GAGGRM) and Glu38. Arg39 is an NADP(+) binding site. Residues 102–104 (GTT) and 126–129 (AANF) contribute to the NAD(+) site. His159 functions as the Proton donor/acceptor in the catalytic mechanism. A (S)-2,3,4,5-tetrahydrodipicolinate-binding site is contributed by His160. Lys163 serves as the catalytic Proton donor. Residue 169-170 (GT) coordinates (S)-2,3,4,5-tetrahydrodipicolinate.

Belongs to the DapB family. In terms of assembly, homotetramer.

Its subcellular location is the cytoplasm. The enzyme catalyses (S)-2,3,4,5-tetrahydrodipicolinate + NAD(+) + H2O = (2S,4S)-4-hydroxy-2,3,4,5-tetrahydrodipicolinate + NADH + H(+). It carries out the reaction (S)-2,3,4,5-tetrahydrodipicolinate + NADP(+) + H2O = (2S,4S)-4-hydroxy-2,3,4,5-tetrahydrodipicolinate + NADPH + H(+). It functions in the pathway amino-acid biosynthesis; L-lysine biosynthesis via DAP pathway; (S)-tetrahydrodipicolinate from L-aspartate: step 4/4. In terms of biological role, catalyzes the conversion of 4-hydroxy-tetrahydrodipicolinate (HTPA) to tetrahydrodipicolinate. The polypeptide is 4-hydroxy-tetrahydrodipicolinate reductase (Photorhabdus laumondii subsp. laumondii (strain DSM 15139 / CIP 105565 / TT01) (Photorhabdus luminescens subsp. laumondii)).